The sequence spans 308 residues: Ribosomal protein L11 methyltransferase (308 aa).

4 residues coordinate S-adenosyl-L-methionine: T160, G181, D203, and N245.

This sequence belongs to the methyltransferase superfamily. PrmA family.

The protein resides in the cytoplasm. The enzyme catalyses L-lysyl-[protein] + 3 S-adenosyl-L-methionine = N(6),N(6),N(6)-trimethyl-L-lysyl-[protein] + 3 S-adenosyl-L-homocysteine + 3 H(+). Methylates ribosomal protein L11. This Thermoanaerobacter sp. (strain X514) protein is Ribosomal protein L11 methyltransferase.